The primary structure comprises 2343 residues: Pecanex-like protein 1 (2343 aa).

2 helical membrane passes run 33-53 and 57-77; these read ALHL…YMAL and MIIV…LKMV. Disordered stretches follow at residues 98 to 163, 271 to 290, 306 to 691, and 749 to 826; these read FTDQ…GSSR, SHSY…SSSA, QQQR…TRAR, and TRSR…QGQQ. Residues 143 to 163 are compositionally biased toward polar residues; it reads SSRNSYAGLDPSNQIGSGSSR. Basic residues predominate over residues 272-282; the sequence is HSYRKEHRPRG. Residues 372–390 are compositionally biased toward low complexity; sequence SLRSLSTRSSGSTESYCSG. Polar residues predominate over residues 396-412; it reads NSTLSSYKSEQTSSTHI. 3 stretches are compositionally biased toward basic and acidic residues: residues 416–457, 507–521, and 530–546; these read LSEH…DKTA, RPPE…EQGE, and KVCK…DVRP. Residues 556 to 571 show a composition bias toward basic residues; the sequence is TSAHKPGRRRTGKKRA. 3 stretches are compositionally biased toward low complexity: residues 624 to 637, 769 to 780, and 809 to 826; these read SDSS…SCQS, AATGAAQASEEA, and TLLI…QGQQ. Helical transmembrane passes span 978-998, 1009-1029, 1034-1054, 1068-1088, 1118-1138, 1162-1182, 1195-1215, 1268-1288, 1296-1316, 1406-1426, 1434-1454, 1458-1478, and 1493-1513; these read FWIL…LLAL, ILAV…LIQG, IWVF…LKSV, IIAY…WLLD, LVIV…LPQV, LLAA…LYGL, HIPV…YHLS, LVVC…TVFT, YVLY…LPQV, SFSS…FFKF, TMLL…ELLY, FVYT…HAFA, and AVVS…AIFI. Positions 2050 to 2120 are disordered; the sequence is EDSDTGGGTS…VQSSLVRQSP (71 aa). 2 stretches are compositionally biased toward polar residues: residues 2060–2080 and 2094–2117; these read CPAN…QGST and PTTS…SLVR.

It belongs to the pecanex family. Specifically expressed in the germ line and not in the somatic cells of the testis, reaching its peak at the pachytene stage of the meiotic prophase. Detected in pachytene spermatocytes and round spermatids (at protein level).

It is found in the membrane. The sequence is that of Pecanex-like protein 1 from Rattus norvegicus (Rat).